A 305-amino-acid chain; its full sequence is Diacylglycerol kinase (305 aa).

Positions 1 to 132 (MRKRARIIYN…VDIGKMNSRY (132 aa)) constitute a DAGKc domain. Residues 10-14 (NPTSG), Thr41, 67-73 (GDGTLNE), and Thr94 contribute to the ATP site. Residues Lys213, Asp216, and Tyr218 each coordinate Mg(2+). The Proton acceptor role is filled by Glu273.

This sequence belongs to the diacylglycerol/lipid kinase family. Homodimer. It depends on Mg(2+) as a cofactor.

The enzyme catalyses a 1,2-diacyl-sn-glycerol + ATP = a 1,2-diacyl-sn-glycero-3-phosphate + ADP + H(+). Catalyzes the phosphorylation of diacylglycerol (DAG) into phosphatidic acid. Is a key enzyme involved in the production of lipoteichoic acid by reintroducing DAG formed from the breakdown of membrane phospholipids into the phosphatidylglycerol biosynthetic pathway. The sequence is that of Diacylglycerol kinase (dagK) from Staphylococcus saprophyticus subsp. saprophyticus (strain ATCC 15305 / DSM 20229 / NCIMB 8711 / NCTC 7292 / S-41).